Reading from the N-terminus, the 139-residue chain is Peptide methionine sulfoxide reductase MsrB (139 aa).

One can recognise a MsrB domain in the interval 9 to 131; it reads TPSDNTELTE…NSASLSFIDD (123 aa). Zn(2+) is bound by residues Cys-48, Cys-51, Cys-97, and Cys-100. Cys-120 serves as the catalytic Nucleophile.

It belongs to the MsrB Met sulfoxide reductase family. Zn(2+) serves as cofactor.

The enzyme catalyses L-methionyl-[protein] + [thioredoxin]-disulfide + H2O = L-methionyl-(R)-S-oxide-[protein] + [thioredoxin]-dithiol. In Pectobacterium carotovorum subsp. carotovorum (strain PC1), this protein is Peptide methionine sulfoxide reductase MsrB.